The sequence spans 387 residues: 2-alkyl-3-oxoalkanoate reductase (387 aa).

Tyr190 functions as the Proton acceptor in the catalytic mechanism. Residue Lys194 participates in NADP(+) binding.

It belongs to the 3-beta-HSD family.

The enzyme catalyses a (2R,3S)-2-alkyl-3-hydroxyalkanoate + NADP(+) = an (R)-2-alkyl-3-oxoalkanoate + NADPH + H(+). Involved in olefin biosynthesis. Catalyzes the reversible stereospecific NADPH-dependent reduction of 2-alkyl-3-oxoalkanoic acids to 2-alkyl-3-hydroxyalkanoic acids. The S.oneidensis oleABCD genes produce 3,6,9,12,15,19,22,25,28-hentriacontanonaene, which may aid the cells in adapting to a sudden drop in temperature. The sequence is that of 2-alkyl-3-oxoalkanoate reductase from Shewanella oneidensis (strain ATCC 700550 / JCM 31522 / CIP 106686 / LMG 19005 / NCIMB 14063 / MR-1).